The following is a 336-amino-acid chain: Dihydrolipoyl dehydrogenase (336 aa).

FAD is bound by residues 34 to 42, Lys-51, and Gly-115; that span reads EKEVVGGIC. Cys-42 and Cys-47 are disulfide-bonded. Residues 180-184, Glu-203, Val-237, and 264-267 contribute to the NAD(+) site; these read GGGVI and SVGT. FAD is bound by residues Asp-304 and Ala-312.

It belongs to the class-I pyridine nucleotide-disulfide oxidoreductase family. Homodimer. It depends on FAD as a cofactor.

It localises to the cytoplasm. The catalysed reaction is N(6)-[(R)-dihydrolipoyl]-L-lysyl-[protein] + NAD(+) = N(6)-[(R)-lipoyl]-L-lysyl-[protein] + NADH + H(+). Its function is as follows. Lipoamide dehydrogenase is a component of the alpha-ketoacid dehydrogenase complexes. The sequence is that of Dihydrolipoyl dehydrogenase (pdhD) from Acholeplasma laidlawii.